The following is a 242-amino-acid chain: Glucosamine-6-phosphate deaminase (242 aa).

The Proton acceptor; for enolization step role is filled by Asp67. The active-site For ring-opening step is the Asn137. His139 functions as the Proton acceptor; for ring-opening step in the catalytic mechanism. Residue Glu144 is the For ring-opening step of the active site.

Belongs to the glucosamine/galactosamine-6-phosphate isomerase family. NagB subfamily.

The catalysed reaction is alpha-D-glucosamine 6-phosphate + H2O = beta-D-fructose 6-phosphate + NH4(+). The protein operates within amino-sugar metabolism; N-acetylneuraminate degradation; D-fructose 6-phosphate from N-acetylneuraminate: step 5/5. In terms of biological role, catalyzes the reversible isomerization-deamination of glucosamine 6-phosphate (GlcN6P) to form fructose 6-phosphate (Fru6P) and ammonium ion. The chain is Glucosamine-6-phosphate deaminase from Staphylococcus saprophyticus subsp. saprophyticus (strain ATCC 15305 / DSM 20229 / NCIMB 8711 / NCTC 7292 / S-41).